A 1415-amino-acid polypeptide reads, in one-letter code: DNA-directed RNA polymerase subunit beta' (1415 aa).

Residues cysteine 72, cysteine 74, cysteine 87, and cysteine 90 each contribute to the Zn(2+) site. Residues aspartate 463, aspartate 465, and aspartate 467 each contribute to the Mg(2+) site. Residues cysteine 811, cysteine 885, cysteine 892, and cysteine 895 each contribute to the Zn(2+) site.

Belongs to the RNA polymerase beta' chain family. The RNAP catalytic core consists of 2 alpha, 1 beta, 1 beta' and 1 omega subunit. When a sigma factor is associated with the core the holoenzyme is formed, which can initiate transcription. The cofactor is Mg(2+). It depends on Zn(2+) as a cofactor.

It carries out the reaction RNA(n) + a ribonucleoside 5'-triphosphate = RNA(n+1) + diphosphate. DNA-dependent RNA polymerase catalyzes the transcription of DNA into RNA using the four ribonucleoside triphosphates as substrates. The chain is DNA-directed RNA polymerase subunit beta' from Cereibacter sphaeroides (strain ATCC 17025 / ATH 2.4.3) (Rhodobacter sphaeroides).